The following is a 205-amino-acid chain: Large ribosomal subunit protein uL4 (205 aa).

The interval 43–97 (GKRQGTSKVKNRSAVRGGGKKPWRQKGTGRARQGSIRAPQWRGGGTVFGPTPRSY) is disordered. Residues 51–71 (VKNRSAVRGGGKKPWRQKGTG) are compositionally biased toward basic residues.

The protein belongs to the universal ribosomal protein uL4 family. As to quaternary structure, part of the 50S ribosomal subunit.

Its function is as follows. One of the primary rRNA binding proteins, this protein initially binds near the 5'-end of the 23S rRNA. It is important during the early stages of 50S assembly. It makes multiple contacts with different domains of the 23S rRNA in the assembled 50S subunit and ribosome. Forms part of the polypeptide exit tunnel. In Lactobacillus acidophilus (strain ATCC 700396 / NCK56 / N2 / NCFM), this protein is Large ribosomal subunit protein uL4.